The following is a 188-amino-acid chain: Probable manganese efflux pump MntP (188 aa).

Helical transmembrane passes span 3–23 (ITATVLLAFGMSMDAFAASIG), 66–86 (LEWNHWIAFVLLIFLGGRMII), 106–128 (WLLVTTAIATSLDAMAVGVGLAF), 143–163 (ATLIMSTLGMMVGRFIGSIIG), and 168–188 (ILGGLVLIGIGVQILWTHFHG).

The protein belongs to the MntP (TC 9.B.29) family.

Its subcellular location is the cell inner membrane. Functionally, probably functions as a manganese efflux pump. The chain is Probable manganese efflux pump MntP from Escherichia coli O7:K1 (strain IAI39 / ExPEC).